The primary structure comprises 196 residues: MRPKVVFVLGGPGAGKGTQCARIVEKYGYTHLSAGELLRDERKNPDSQYGELIEKYIKDGKIVPVEITISLLRREMDQTMAANAQKNKFLIDGFPRNQDNLQGWNKTMDGKADVSFVLFFDCNNEICIERCLERGKSSGRSDDNRESLEKRIQTYLQSTKPIIDLYEEMGKVKKIDASKSVDEVFDEVVKIFDKEG.

An ATP-binding site is contributed by 13 to 18 (GAGKGT). Position 33 is a phosphoserine (Ser33). The tract at residues 33–63 (SAGELLRDERKNPDSQYGELIEKYIKDGKIV) is NMP. Arg39 provides a ligand contact to a ribonucleoside 5'-phosphate. An N6-acetyllysine mark is found at Lys43 and Lys55. A ribonucleoside 5'-phosphate-binding positions include 61–63 (KIV) and 93–96 (GFPR). A CMP-binding site is contributed by Asn100. Lys106 carries the N6-succinyllysine modification. Positions 133 to 143 (ERGKSSGRSDD) are LID. ATP is bound at residue Arg134. Residues Arg140 and Arg151 each contribute to the a ribonucleoside 5'-phosphate site. Lys179 provides a ligand contact to ATP. At Ser180 the chain carries Phosphoserine.

It belongs to the adenylate kinase family. UMP-CMP kinase subfamily. In terms of assembly, monomer. Mg(2+) serves as cofactor.

The protein localises to the nucleus. Its subcellular location is the cytoplasm. It carries out the reaction CMP + ATP = CDP + ADP. It catalyses the reaction dCMP + ATP = dCDP + ADP. The catalysed reaction is UMP + ATP = UDP + ADP. The enzyme catalyses a 2'-deoxyribonucleoside 5'-diphosphate + ATP = a 2'-deoxyribonucleoside 5'-triphosphate + ADP. It carries out the reaction a ribonucleoside 5'-diphosphate + ATP = a ribonucleoside 5'-triphosphate + ADP. In terms of biological role, catalyzes the phosphorylation of pyrimidine nucleoside monophosphates at the expense of ATP. Plays an important role in de novo pyrimidine nucleotide biosynthesis. Has preference for UMP and CMP as phosphate acceptors. Also displays broad nucleoside diphosphate kinase activity. The polypeptide is UMP-CMP kinase (Sus scrofa (Pig)).